A 388-amino-acid polypeptide reads, in one-letter code: Nuclear hormone receptor family member nhr-16 (388 aa).

The segment at residues 11–86 is a DNA-binding region (nuclear receptor); sequence FLKCAICQES…VGMNPAGVQQ (76 aa). 2 consecutive NR C4-type zinc fingers follow at residues 14-34 and 50-74; these read CAICQESAEGFHFGAEACRAC and CQGNNDCDVTINIRCMCRACRYIKC. The NR LBD domain occupies 115-387; the sequence is PPSSLMLHIP…DEFYNLMSGR (273 aa).

Belongs to the nuclear hormone receptor family.

The protein localises to the nucleus. Its function is as follows. Orphan nuclear receptor. In Caenorhabditis elegans, this protein is Nuclear hormone receptor family member nhr-16 (nhr-16).